A 634-amino-acid chain; its full sequence is Probable potassium transport system protein Kup (634 aa).

Transmembrane regions (helical) follow at residues 19 to 39 (AIGL…TSPL), 62 to 82 (VLSL…VIFV), 113 to 133 (FVVV…MITP), 150 to 170 (GLEH…FLIQ), 177 to 197 (IGIL…ALGV), 225 to 245 (IGVA…ALYA), 259 to 279 (WFLL…ATIL), 291 to 311 (LLAP…ATVI), 349 to 369 (IYIG…VLGF), 379 to 399 (YGVA…VVIW), 406 to 426 (LWLG…FFAA), and 431 to 451 (VIQG…LMST).

Belongs to the HAK/KUP transporter (TC 2.A.72) family.

The protein localises to the cell inner membrane. It carries out the reaction K(+)(in) + H(+)(in) = K(+)(out) + H(+)(out). Transport of potassium into the cell. Likely operates as a K(+):H(+) symporter. The chain is Probable potassium transport system protein Kup from Pseudomonas aeruginosa (strain LESB58).